A 296-amino-acid polypeptide reads, in one-letter code: GTPase Era (296 aa).

An Era-type G domain is found at 7 to 174 (KCSMSAIVGA…VDYLCETSPY (168 aa)). The tract at residues 15-22 (GATNAGKS) is G1. 15–22 (GATNAGKS) contributes to the GTP binding site. A G2 region spans residues 41–45 (QTTRV). Positions 62 to 65 (DTPG) are G3. GTP-binding positions include 62–66 (DTPGI) and 124–127 (NKID). The G4 stretch occupies residues 124–127 (NKID). Positions 153 to 155 (ISA) are G5. Residues 205–282 (LRHELPYSLS…HLFLFVKVRE (78 aa)) form the KH type-2 domain.

This sequence belongs to the TRAFAC class TrmE-Era-EngA-EngB-Septin-like GTPase superfamily. Era GTPase family. As to quaternary structure, monomer.

It localises to the cytoplasm. The protein localises to the cell inner membrane. Its function is as follows. An essential GTPase that binds both GDP and GTP, with rapid nucleotide exchange. Plays a role in 16S rRNA processing and 30S ribosomal subunit biogenesis and possibly also in cell cycle regulation and energy metabolism. This is GTPase Era from Ehrlichia ruminantium (strain Welgevonden).